Consider the following 257-residue polypeptide: Phosphonates import ATP-binding protein PhnC (257 aa).

The ABC transporter domain occupies 4 to 248 (IEFKNVSKVY…VFSEIYGRTI (245 aa)). Residue 37-44 (GLSGAGKS) participates in ATP binding.

It belongs to the ABC transporter superfamily. Phosphonates importer (TC 3.A.1.9.1) family. In terms of assembly, the complex is composed of two ATP-binding proteins (PhnC), two transmembrane proteins (PhnE) and a solute-binding protein (PhnD).

The protein resides in the cell membrane. It catalyses the reaction phosphonate(out) + ATP + H2O = phosphonate(in) + ADP + phosphate + H(+). Part of the ABC transporter complex PhnCDE involved in phosphonates import. Responsible for energy coupling to the transport system. The protein is Phosphonates import ATP-binding protein PhnC of Staphylococcus aureus (strain COL).